Consider the following 528-residue polypeptide: DEAD-box ATP-dependent RNA helicase CshA (528 aa).

Positions 2-30 (TTFRELGLSDSLLQSVESMGFEEATPIQA) match the Q motif motif. Residues 33 to 203 (IPHALQGKDI…ERFMTEPQHI (171 aa)) enclose the Helicase ATP-binding domain. 46–53 (AQTGTGKT) serves as a coordination point for ATP. The DEAD box signature appears at 151–154 (DEAD). The Helicase C-terminal domain maps to 214 to 374 (NIQQFYLEVQ…RMDAPTLDEA (161 aa)). Residues 428-528 (TTPIALTSEP…RKHHSRKPQA (101 aa)) form a disordered region. Positions 458-506 (DGNRNRSRDGRGGDGRNRDRNRDGRNRDGNRDRNREGSRDGNRGRRGEG) are enriched in basic and acidic residues. A compositionally biased stretch (basic residues) spans 518 to 528 (ERKHHSRKPQA).

The protein belongs to the DEAD box helicase family. CshA subfamily. As to quaternary structure, oligomerizes, may be a member of the RNA degradosome.

It localises to the cytoplasm. The enzyme catalyses ATP + H2O = ADP + phosphate + H(+). Functionally, DEAD-box RNA helicase possibly involved in RNA degradation. Unwinds dsRNA in both 5'- and 3'-directions, has RNA-dependent ATPase activity. This is DEAD-box ATP-dependent RNA helicase CshA from Bacillus thuringiensis (strain Al Hakam).